A 279-amino-acid chain; its full sequence is Tryptophan 2,3-dioxygenase (279 aa).

Substrate is bound by residues 48-52 (FIVIH), tyrosine 110, and arginine 114. A heme-binding site is contributed by histidine 237. Threonine 251 is a substrate binding site.

The protein belongs to the tryptophan 2,3-dioxygenase family. Homotetramer. Heme serves as cofactor.

It catalyses the reaction L-tryptophan + O2 = N-formyl-L-kynurenine. The protein operates within amino-acid degradation; L-tryptophan degradation via kynurenine pathway; L-kynurenine from L-tryptophan: step 1/2. In terms of biological role, heme-dependent dioxygenase that catalyzes the oxidative cleavage of the L-tryptophan (L-Trp) pyrrole ring and converts L-tryptophan to N-formyl-L-kynurenine. Catalyzes the oxidative cleavage of the indole moiety. The sequence is that of Tryptophan 2,3-dioxygenase from Bacillus thuringiensis subsp. konkukian (strain 97-27).